The following is a 421-amino-acid chain: Bestrophin homolog 2 (421 aa).

4 consecutive transmembrane segments (helical) span residues isoleucine 28 to valine 48, leucine 73 to tryptophan 93, leucine 239 to alanine 259, and valine 275 to isoleucine 295.

Belongs to the anion channel-forming bestrophin (TC 1.A.46) family. Calcium-sensitive chloride channel subfamily. As to quaternary structure, forms oligomers.

Its subcellular location is the cell membrane. Functionally, forms chloride channels. This chain is Bestrophin homolog 2 (best-2), found in Caenorhabditis elegans.